A 131-amino-acid chain; its full sequence is D-ribose pyranase (131 aa).

The active-site Proton donor is H20. Residues D28, H98, and 120–122 (YAN) each bind substrate.

It belongs to the RbsD / FucU family. RbsD subfamily. In terms of assembly, homodecamer.

The protein resides in the cytoplasm. It carries out the reaction beta-D-ribopyranose = beta-D-ribofuranose. The protein operates within carbohydrate metabolism; D-ribose degradation; D-ribose 5-phosphate from beta-D-ribopyranose: step 1/2. Its function is as follows. Catalyzes the interconversion of beta-pyran and beta-furan forms of D-ribose. The protein is D-ribose pyranase of Bacillus cereus (strain B4264).